Consider the following 895-residue polypeptide: DNA double-strand break repair Rad50 ATPase (895 aa).

ATP is bound by residues 32–38 (NGAGKSS) and glutamine 137. Residues 183-253 (SDYDYLKNEL…LNAQLETIKK (71 aa)) are a coiled coil. In terms of domain architecture, Zinc-hook spans 411 to 507 (RAEINSSLMQ…ERKHQKKLLD (97 aa)). Cysteine 455 and cysteine 458 together coordinate Zn(2+). 2 coiled-coil regions span residues 464–510 (TEKS…DRIN) and 618–647 (ENSLKRIDEELNSLRNKKNELYAKKAAMDE).

The protein belongs to the SMC family. RAD50 subfamily. Homodimer. Forms a heterotetramer composed of two Mre11 subunits and two Rad50 subunits. Zn(2+) serves as cofactor.

In terms of biological role, part of the Rad50/Mre11 complex, which is involved in the early steps of DNA double-strand break (DSB) repair. The complex may facilitate opening of the processed DNA ends to aid in the recruitment of HerA and NurA. Rad50 controls the balance between DNA end bridging and DNA resection via ATP-dependent structural rearrangements of the Rad50/Mre11 complex. This is DNA double-strand break repair Rad50 ATPase from Thermoplasma volcanium (strain ATCC 51530 / DSM 4299 / JCM 9571 / NBRC 15438 / GSS1).